The primary structure comprises 528 residues: uncharacterized protein (528 aa).

6–35 (DYVVVGTGSAGAVVASRLSTDPATTVVALE) lines the FAD pocket. H468 acts as the Proton acceptor in catalysis.

This sequence belongs to the GMC oxidoreductase family. Requires FAD as cofactor.

This is an uncharacterized protein from Mycobacterium bovis (strain ATCC BAA-935 / AF2122/97).